A 238-amino-acid chain; its full sequence is DNA repair protein RecO (238 aa).

Belongs to the RecO family.

Functionally, involved in DNA repair and RecF pathway recombination. In Aliivibrio salmonicida (strain LFI1238) (Vibrio salmonicida (strain LFI1238)), this protein is DNA repair protein RecO.